A 502-amino-acid chain; its full sequence is Maturase K (502 aa).

The protein belongs to the intron maturase 2 family. MatK subfamily.

The protein resides in the plastid. Its subcellular location is the chloroplast. Its function is as follows. Usually encoded in the trnK tRNA gene intron. Probably assists in splicing its own and other chloroplast group II introns. This chain is Maturase K, found in Stanleya pinnata (Prince's plume).